A 374-amino-acid chain; its full sequence is Putative glutamate--cysteine ligase 2 (374 aa).

The protein belongs to the glutamate--cysteine ligase type 2 family. YbdK subfamily.

It catalyses the reaction L-cysteine + L-glutamate + ATP = gamma-L-glutamyl-L-cysteine + ADP + phosphate + H(+). Its function is as follows. ATP-dependent carboxylate-amine ligase which exhibits weak glutamate--cysteine ligase activity. The polypeptide is Putative glutamate--cysteine ligase 2 (Verminephrobacter eiseniae (strain EF01-2)).